The sequence spans 100 residues: Small ribosomal subunit protein uS14c (100 aa).

Belongs to the universal ribosomal protein uS14 family. As to quaternary structure, part of the 30S ribosomal subunit.

The protein localises to the plastid. It is found in the chloroplast. In terms of biological role, binds 16S rRNA, required for the assembly of 30S particles. This Buxus microphylla (Littleleaf boxwood) protein is Small ribosomal subunit protein uS14c.